We begin with the raw amino-acid sequence, 1096 residues long: Pentatricopeptide repeat-containing protein At5g55840 (1096 aa).

PPR repeat units follow at residues 122–156 (NPSV…GFNP), 157–191 (SVYT…KICP), 192–226 (DVAT…GYAP), 227–261 (TIVT…GVDA), 262–296 (DVCT…MIHP), 297–331 (NEVT…GLSP), 332–366 (NHVT…GLTP), 367–401 (SEVS…GVCV), 402–436 (GRIT…GIDP), 437–471 (DIVT…GLSP), 472–506 (NGII…GHTR), 507–541 (DHFT…GILP), 542–576 (NTVS…GHHP), 577–607 (TFFT…LHAV), 612–646 (DTVM…SILP), 647–681 (DSYT…GNVL), 683–717 (NKVM…GHTP), 718–752 (DIVT…NGGP), 753–787 (NLTT…GILP), 788–822 (DKLT…GVEV), 823–857 (DRYT…GISL), 858–892 (DKDT…GISP), 893–927 (ESRK…KICP), 928–962 (PNVA…KLVP), 963–997 (TIAS…GLKL), 998–1032 (DLVS…GFLA), and 1033–1068 (NATT…GFIT).

The protein belongs to the PPR family. P subfamily.

The polypeptide is Pentatricopeptide repeat-containing protein At5g55840 (Arabidopsis thaliana (Mouse-ear cress)).